Consider the following 418-residue polypeptide: Probable aminotransferase Rv1178 (418 aa).

The disordered stretch occupies residues 22-42 (GQGWHDRERPASGQGSGAAER).

Belongs to the class-I pyridoxal-phosphate-dependent aminotransferase family. Requires pyridoxal 5'-phosphate as cofactor.

In Mycobacterium tuberculosis (strain ATCC 25618 / H37Rv), this protein is Probable aminotransferase Rv1178.